The primary structure comprises 404 residues: G1/S-specific cyclin-E2 (404 aa).

The interval 1–44 is disordered; that stretch reads MSRRSSRLQAKQQPQPSQTESPQEAQIIQAKKRKTTQDVKKRRE. The segment covering 12 to 26 has biased composition (low complexity); that stretch reads QQPQPSQTESPQEAQ. S21 is subject to Phosphoserine. Basic and acidic residues predominate over residues 35–44; sequence TTQDVKKRRE. K348 bears the N6-lactoyllysine mark. S383 is subject to Phosphoserine. Residue T392 is modified to Phosphothreonine.

It belongs to the cyclin family. Cyclin E subfamily. In terms of assembly, interacts with the CDK2 (in vivo) and CDK3 (in vitro) protein kinases to form a serine/threonine kinase holoenzyme complex. The cyclin subunit imparts substrate specificity to the complex. In terms of processing, phosphorylation by CDK2 triggers its release from CDK2 and degradation via the ubiquitin proteasome pathway. Lactylated at Lys-348. Delactylated by SIRT3. In terms of tissue distribution, according to PubMed:9858585, highest levels of expression in adult testis, thymus and brain. Lower levels in placenta, spleen and colon. Consistently elevated levels in tumor-derived cells compared to non-transformed proliferating cells. According to PubMed:9840927: low levels in thymus, prostate, brain, skeletal muscle, and kidney. Elevated levels in lung. According to PubMed:9840943 highly expressed in testis, placenta, thymus and brain. In a lesser extent in small intestine and colon.

It localises to the nucleus. In terms of biological role, essential for the control of the cell cycle at the late G1 and early S phase. The protein is G1/S-specific cyclin-E2 (CCNE2) of Homo sapiens (Human).